Consider the following 173-residue polypeptide: Probable calcium-binding protein CML14 (173 aa).

EF-hand domains follow at residues 21–56, 57–92, 97–132, and 133–168; these read SQLKQLRELFRRFDMNGDGSLTQLELAALLRSLGLR, PTGDEVHALLAGMDANGNGSVEFDELAAAIAPVLTT, VDQAQLLEVFRAFDRDGNGFISAAELARSMARLGQP, and LTFEELTRMMRDADTDGDGVISFKEFAAVMAKSALD. Ca(2+) is bound by residues aspartate 34, asparagine 36, aspartate 38, serine 40, glutamate 45, aspartate 70, asparagine 72, asparagine 74, serine 76, glutamate 81, aspartate 110, aspartate 112, asparagine 114, glutamate 121, aspartate 146, aspartate 148, aspartate 150, and glutamate 157.

Functionally, potential calcium sensor. This chain is Probable calcium-binding protein CML14 (CML14), found in Oryza sativa subsp. japonica (Rice).